The following is a 313-amino-acid chain: Malate dehydrogenase (313 aa).

Residues 8-13 (GAGNVG) and Asp-33 contribute to the NAD(+) site. Residues Arg-83 and Arg-89 each contribute to the substrate site. NAD(+)-binding positions include Asn-96 and 119-121 (ISN). 2 residues coordinate substrate: Asn-121 and Arg-152. Residue His-176 is the Proton acceptor of the active site.

It belongs to the LDH/MDH superfamily. MDH type 3 family.

The enzyme catalyses (S)-malate + NAD(+) = oxaloacetate + NADH + H(+). Catalyzes the reversible oxidation of malate to oxaloacetate. This is Malate dehydrogenase from Parabacteroides distasonis (strain ATCC 8503 / DSM 20701 / CIP 104284 / JCM 5825 / NCTC 11152).